Reading from the N-terminus, the 383-residue chain is uncharacterized protein (383 aa).

This sequence belongs to the peptidase M20 family.

This is an uncharacterized protein from Staphylococcus epidermidis (strain ATCC 35984 / DSM 28319 / BCRC 17069 / CCUG 31568 / BM 3577 / RP62A).